Consider the following 459-residue polypeptide: LETM1 domain-containing protein LETM2, mitochondrial (459 aa).

The N-terminal 25 residues, 1–25 (MAFYSYNSFLAIFWTRLPGHSVHPP), are a transit peptide targeting the mitochondrion. The Mitochondrial intermembrane segment spans residues 26 to 176 (CSHFPPLAFF…LLRTCADVFR (151 aa)). A disordered region spans residues 88–114 (GKPQPEQIPEEPKATDPQPTKDDQTEV). The span at 97–111 (EEPKATDPQPTKDDQ) shows a compositional bias: basic and acidic residues. A helical transmembrane segment spans residues 177-197 (LVPFVVFIIVPFMEFLIPVFL). Residues 198-459 (KLFPDMLPST…QNSKANSKGA (262 aa)) lie on the Mitochondrial matrix side of the membrane. Residues 220-440 (KMMGAKLEIA…PAPQLNGTKI (221 aa)) enclose the Letm1 RBD domain. The segment at 403 to 459 (LPPSIETPKTNLGIPSSPPPESKEDITDPAPQLNGTKILQAKSQETSQNSKANSKGA) is disordered. The segment covering 435–459 (LNGTKILQAKSQETSQNSKANSKGA) has biased composition (polar residues).

In terms of tissue distribution, testis and sperm.

The protein localises to the mitochondrion inner membrane. This chain is LETM1 domain-containing protein LETM2, mitochondrial (Letm2), found in Rattus norvegicus (Rat).